Reading from the N-terminus, the 574-residue chain is Sulfate adenylyltransferase (574 aa).

Residues 1–170 (MANAPHGGVL…VQAVSKPAYY (170 aa)) form an N-terminal region. Residues 171–395 (DYVALRYTPA…LRESYPPKAK (225 aa)) are catalytic. Gln198 serves as a coordination point for sulfate. ATP contacts are provided by residues 198 to 201 (QTRN) and 292 to 295 (GRDH). Residues Thr199, Arg200, and Asn201 contribute to the active site. Arg200 contributes to the sulfate binding site. Position 296 (Ala296) interacts with sulfate. Met334 is an ATP binding site. An allosteric regulation domain; adenylyl-sulfate kinase-like region spans residues 396–574 (QGFTLFLTGL…ILLLEAQSLI (179 aa)). Residues 435-438 (ETVR), Arg452, 478-479 (IA), and Lys519 contribute to the 3'-phosphoadenylyl sulfate site.

In the N-terminal section; belongs to the sulfate adenylyltransferase family. The protein in the C-terminal section; belongs to the APS kinase family. As to quaternary structure, homohexamer. Dimer of trimers.

Its subcellular location is the cytoplasm. It catalyses the reaction sulfate + ATP + H(+) = adenosine 5'-phosphosulfate + diphosphate. The protein operates within sulfur metabolism; hydrogen sulfide biosynthesis; sulfite from sulfate: step 1/3. Allosterically inhibited by 3'-phosphoadenosine 5'-phosphosulfate (PAPS). Its function is as follows. Catalyzes the first intracellular reaction of sulfate assimilation, forming adenosine-5'-phosphosulfate (APS) from inorganic sulfate and ATP. Plays an important role in sulfate activation as a component of the biosynthesis pathway of sulfur-containing amino acids. This chain is Sulfate adenylyltransferase, found in Mycosarcoma maydis (Corn smut fungus).